The primary structure comprises 306 residues: Curved DNA-binding protein (306 aa).

The J domain occupies 5–69; sequence DYYAIMGVKP…QRRAEYDQMW (65 aa).

The protein localises to the cytoplasm. It is found in the nucleoid. In terms of biological role, DNA-binding protein that preferentially recognizes a curved DNA sequence. It is probably a functional analog of DnaJ; displays overlapping activities with DnaJ, but functions under different conditions, probably acting as a molecular chaperone in an adaptive response to environmental stresses other than heat shock. Lacks autonomous chaperone activity; binds native substrates and targets them for recognition by DnaK. Its activity is inhibited by the binding of CbpM. The polypeptide is Curved DNA-binding protein (Shigella boydii serotype 18 (strain CDC 3083-94 / BS512)).